Reading from the N-terminus, the 197-residue chain is Probable nicotinate-nucleotide adenylyltransferase (197 aa).

This sequence belongs to the NadD family.

It catalyses the reaction nicotinate beta-D-ribonucleotide + ATP + H(+) = deamido-NAD(+) + diphosphate. Its pathway is cofactor biosynthesis; NAD(+) biosynthesis; deamido-NAD(+) from nicotinate D-ribonucleotide: step 1/1. Its function is as follows. Catalyzes the reversible adenylation of nicotinate mononucleotide (NaMN) to nicotinic acid adenine dinucleotide (NaAD). The protein is Probable nicotinate-nucleotide adenylyltransferase of Porphyromonas gingivalis (strain ATCC 33277 / DSM 20709 / CIP 103683 / JCM 12257 / NCTC 11834 / 2561).